Reading from the N-terminus, the 299-residue chain is Taste receptor type 2 member 16 (299 aa).

The Extracellular segment spans residues 1-5 (MVPTQ). The helical transmembrane segment at 6–26 (VTIFSIIMYVLESLVIIVQSC) threads the bilayer. The Cytoplasmic segment spans residues 27 to 44 (TTVAVLFREWMHFQRLSP). A helical membrane pass occupies residues 45–65 (VEIILISLGISHFCLQWTSML). The Extracellular segment spans residues 66-82 (YNFGTYSRPVLLFWKVS). The chain crosses the membrane as a helical span at residues 83-103 (VVWEFMNVLTFWLTSLLAVLY). The Cytoplasmic portion of the chain corresponds to 104-125 (CVKVSSFSHPVFLWLRLKILKL). A helical transmembrane segment spans residues 126 to 146 (VLWLLLGALIASCLSIIPSVV). The Extracellular portion of the chain corresponds to 147-183 (KYHIQMELLTLDHLPKNSSLILRLQMFEWYFSNPFKM). Residue N163 is glycosylated (N-linked (GlcNAc...) asparagine). The chain crosses the membrane as a helical span at residues 184–204 (IGFGVPFLVFLISIILLTVSL). Residues 205–233 (VQHWGQMKHYSSSSSSLRAQCTVLKSLAT) lie on the Cytoplasmic side of the membrane. The helical transmembrane segment at 234–254 (FFIFFTSYFLTIVVSFIGTVF) threads the bilayer. Residues 255 to 258 (DKKS) are Extracellular-facing. The helical transmembrane segment at 259–279 (WFWVCEAVIYGLVCIHFTSLM) threads the bilayer. Over 280–299 (MSNPTLKKALRLQFWSPESS) the chain is Cytoplasmic.

It belongs to the G-protein coupled receptor T2R family. In terms of assembly, interacts with RTP3 and RTP4. In terms of tissue distribution, expressed in subsets of taste receptor cells of the tongue and palate epithelium and exclusively in gustducin-positive cells. Expressed in the antrum and fundus (part of the stomach), duodenum and in gastric endocrine cells.

Its subcellular location is the cell membrane. Its function is as follows. Gustducin-coupled receptor implicated in the perception of bitter compounds in the oral cavity and the gastrointestinal tract. Signals through PLCB2 and the calcium-regulated cation channel TRPM5. This Rattus norvegicus (Rat) protein is Taste receptor type 2 member 16 (Tas2r16).